We begin with the raw amino-acid sequence, 206 residues long: Large ribosomal subunit protein uL4 (206 aa).

The interval 43-94 (ARSGNRAQKDREQVKHTTKKPWRQKGTGRARAGMSSSPLWRGGGRIFPNSPE) is disordered. The segment covering 58–70 (HTTKKPWRQKGTG) has biased composition (basic residues).

The protein belongs to the universal ribosomal protein uL4 family. In terms of assembly, part of the 50S ribosomal subunit.

Functionally, one of the primary rRNA binding proteins, this protein initially binds near the 5'-end of the 23S rRNA. It is important during the early stages of 50S assembly. It makes multiple contacts with different domains of the 23S rRNA in the assembled 50S subunit and ribosome. Forms part of the polypeptide exit tunnel. This Polynucleobacter asymbioticus (strain DSM 18221 / CIP 109841 / QLW-P1DMWA-1) (Polynucleobacter necessarius subsp. asymbioticus) protein is Large ribosomal subunit protein uL4.